A 790-amino-acid chain; its full sequence is B3 domain-containing transcription repressor VAL1 (790 aa).

Residues 234-260 form a disordered region; that stretch reads KPSRPAISTPPVASKSAQARIGRPPVE. The TF-B3 DNA-binding region spans 295 to 396; that stretch reads FEKTLSASDA…KLIMGSRKAA (102 aa). Disordered regions lie at residues 400–429 and 446–468; these read DMQGCGLTNGTSTEDTSSSGVTENPPSING and NLNSETNGGRIGDDPTRVKEKKR. Residues 405 to 429 are compositionally biased toward polar residues; sequence GLTNGTSTEDTSSSGVTENPPSING. The segment at 538-588 adopts a CW-type zinc-finger fold; the sequence is SGEQERWATCDDCSKWRRLPVDALLSFKWTCIDNVWDVSRCSCSAPEESLK. The Zn(2+) site is built by cysteine 547, cysteine 550, cysteine 568, and cysteine 580. Residues 685 to 732 are a coiled coil; sequence LMMRRKKKQLERDVTAAEDKKKKDMELAESDKSKEEKEVNTARIDLNS. The tract at residues 689 to 737 is disordered; that stretch reads RKKKQLERDVTAAEDKKKKDMELAESDKSKEEKEVNTARIDLNSDPYNK. A compositionally biased stretch (basic and acidic residues) spans 694-724; sequence LERDVTAAEDKKKKDMELAESDKSKEEKEVN.

In terms of assembly, interacts with SNL1. Expressed in flowers and at lower levels in roots, stems and leaves.

It localises to the nucleus. Its function is as follows. Transcriptional repressor of gene expression involved in embryonic pathways, such as LEC1, ABI3, and FUS3. Repressor of the sugar-inducible genes involved in the seed maturation program in seedlings. Plays an essential role in regulating the transition from seed maturation to seedling growth. Functionally redundant with VAL2/HSL1. The chain is B3 domain-containing transcription repressor VAL1 (VAL1) from Arabidopsis thaliana (Mouse-ear cress).